Here is a 127-residue protein sequence, read N- to C-terminus: Protein ApaG (127 aa).

One can recognise an ApaG domain in the interval 3-127 (EGKKYEIAVK…FILSVPRILH (125 aa)).

This Nitrosospira multiformis (strain ATCC 25196 / NCIMB 11849 / C 71) protein is Protein ApaG.